A 253-amino-acid polypeptide reads, in one-letter code: Sulfate transporter CysZ (253 aa).

4 consecutive transmembrane segments (helical) span residues 31-51 (FVIL…WWLF), 72-92 (LSYL…GYFF), 151-171 (IVLL…PVLW), and 222-242 (IPVL…AMWV).

The protein belongs to the CysZ family.

It is found in the cell inner membrane. High affinity, high specificity proton-dependent sulfate transporter, which mediates sulfate uptake. Provides the sulfur source for the cysteine synthesis pathway. This Salmonella paratyphi A (strain AKU_12601) protein is Sulfate transporter CysZ.